The sequence spans 234 residues: Leucyl/phenylalanyl-tRNA--protein transferase (234 aa).

This sequence belongs to the L/F-transferase family.

The protein resides in the cytoplasm. It carries out the reaction N-terminal L-lysyl-[protein] + L-leucyl-tRNA(Leu) = N-terminal L-leucyl-L-lysyl-[protein] + tRNA(Leu) + H(+). The enzyme catalyses N-terminal L-arginyl-[protein] + L-leucyl-tRNA(Leu) = N-terminal L-leucyl-L-arginyl-[protein] + tRNA(Leu) + H(+). It catalyses the reaction L-phenylalanyl-tRNA(Phe) + an N-terminal L-alpha-aminoacyl-[protein] = an N-terminal L-phenylalanyl-L-alpha-aminoacyl-[protein] + tRNA(Phe). In terms of biological role, functions in the N-end rule pathway of protein degradation where it conjugates Leu, Phe and, less efficiently, Met from aminoacyl-tRNAs to the N-termini of proteins containing an N-terminal arginine or lysine. The sequence is that of Leucyl/phenylalanyl-tRNA--protein transferase from Pectobacterium carotovorum subsp. carotovorum (strain PC1).